A 378-amino-acid polypeptide reads, in one-letter code: Alginate lyase (378 aa).

A signal peptide spans 1 to 28; sequence MQTPKLIRPTLLSMAIVSSMAWATGASA. Substrate is bound by residues 67-68, 140-141, and tyrosine 258; these read SK and HT.

It belongs to the polysaccharide lyase 5 family.

Its subcellular location is the periplasm. The catalysed reaction is Eliminative cleavage of alginate to give oligosaccharides with 4-deoxy-alpha-L-erythro-hex-4-enuronosyl groups at their non-reducing ends and beta-D-mannuronate at their reducing end.. In terms of biological role, catalyzes the depolymerization of alginate by cleaving the beta-1,4 glycosidic bond between two adjacent sugar residues via a beta-elimination mechanism. May serve to degrade mislocalized alginate that is trapped in the periplasmic space. The polypeptide is Alginate lyase (Pseudomonas syringae pv. tomato (strain ATCC BAA-871 / DC3000)).